A 400-amino-acid polypeptide reads, in one-letter code: NADPH dehydrogenase 1 (400 aa).

The FMN site is built by Thr-38 and Gln-115. Positions 192 and 195 each coordinate substrate. Tyr-197 acts as the Proton donor in catalysis. The FMN site is built by Arg-244 and Arg-349. Position 376 (Tyr-376) interacts with substrate.

As to quaternary structure, homodimer or heterodimer. It depends on FMN as a cofactor.

It carries out the reaction A + NADPH + H(+) = AH2 + NADP(+). Flavin-dependent enoate reductase that catalyzes the chemo- and stereoslective hydrogenation of electron-poor alkenes. The enzyme is reduced by NADPH, and oxygen, quinones, and alpha,beta-unsaturated aldehydes and ketones can act as electron acceptors to complete catalytic turnover. The physiological oxidant remains elusive. The sequence is that of NADPH dehydrogenase 1 from Saccharomyces pastorianus (Lager yeast).